A 424-amino-acid polypeptide reads, in one-letter code: MSNSKLFSDAKKVIPSGVNSPVRYFEPYPFFTKKANGAYIWDVDNRKLIDFCNGYGALLLGHRRKEIINSVSKQLTKGTLYCTPTEGETELAKLIIGNFPSIDKVRLMNTGGEATMTAIRLARGFTKKKKIIKFEGCYHGAHDSVLVKAGSGSAHNGISVSDGGLDEVSKNTLVVQYNNIEDLQKTIQKNKDIAGVIVEPILANMGLILPEKNFLSDLRKITKENNIPLIFDEVVTGFRVAPGGAQEHFGIKPDITTMAKALSNGFAISAVGGKKEIMDLLSPGGKVYQASTFAGNPISVSAAIASIKTINKLKNKLYSKLERFNLLFSTALDDMATDMGIPHQINFTASMFQIFFTNKPVTNYETSKKANAKKFQKLFRTLLKKGIFIAPSQFEVVFLSDAHTENDLNKTLDAYHLALKSVKN.

Position 260 is an N6-(pyridoxal phosphate)lysine (lysine 260).

Belongs to the class-III pyridoxal-phosphate-dependent aminotransferase family. HemL subfamily. Pyridoxal 5'-phosphate serves as cofactor.

Its subcellular location is the cytoplasm. It catalyses the reaction (S)-4-amino-5-oxopentanoate = 5-aminolevulinate. The protein operates within porphyrin-containing compound metabolism; protoporphyrin-IX biosynthesis; 5-aminolevulinate from L-glutamyl-tRNA(Glu): step 2/2. This Nitrosopumilus maritimus (strain SCM1) protein is Glutamate-1-semialdehyde 2,1-aminomutase.